The sequence spans 363 residues: Neurogenic differentiation factor 2 (363 aa).

The segment at 1–116 is disordered; sequence MLTRLFKEPS…VRRQKANARE (116 aa). Residues 28 to 44 are compositionally biased toward basic and acidic residues; sequence EDSKTKDEEQERCRLGD. Over residues 64–83 the composition is skewed to acidic residues; it reads AGEEDYDEDVDEDDCGEEGD. The span at 87–98 shows a compositional bias: basic residues; the sequence is PKKRGPKKRKMT. The short motif at 93-99 is the Nuclear localization signal element; that stretch reads KKRKMTP. One can recognise a bHLH domain in the interval 107–159; it reads VRRQKANARERTRMHDLNSALDNLLKVVPCYSKTQKLSKIETLRLAKNYIWAL.

Efficient DNA binding requires dimerization with another bHLH protein. In adult, expressed strongly in brain and more weakly in skin, muscle, eye and ovary.

It is found in the nucleus. Functionally, transcriptional regulator. Appears to mediate neuronal differentiation. This Danio rerio (Zebrafish) protein is Neurogenic differentiation factor 2.